We begin with the raw amino-acid sequence, 1217 residues long: DNA-directed RNA polymerase subunit beta' (1217 aa).

Cysteine 60, cysteine 62, cysteine 75, and cysteine 78 together coordinate Zn(2+). Mg(2+) is bound by residues aspartate 449, aspartate 451, and aspartate 453. Cysteine 818, cysteine 892, cysteine 899, and cysteine 902 together coordinate Zn(2+).

This sequence belongs to the RNA polymerase beta' chain family. The RNAP catalytic core consists of 2 alpha, 1 beta, 1 beta' and 1 omega subunit. When a sigma factor is associated with the core the holoenzyme is formed, which can initiate transcription. The cofactor is Mg(2+). Zn(2+) serves as cofactor.

It catalyses the reaction RNA(n) + a ribonucleoside 5'-triphosphate = RNA(n+1) + diphosphate. DNA-dependent RNA polymerase catalyzes the transcription of DNA into RNA using the four ribonucleoside triphosphates as substrates. In Enterococcus faecalis (strain ATCC 700802 / V583), this protein is DNA-directed RNA polymerase subunit beta'.